Consider the following 118-residue polypeptide: MIWSKLSSSINYYINKRIWGEELLKENILLLNQYIEDAFILEDGIYKYLDKKTYEYIDLSEEDMKKIEEAFIERLEKKRKVNKDKENFKNHMIMITEYLENEKSKEKSNVIELKNYRK.

This is an uncharacterized protein from Clostridium perfringens.